The following is a 139-amino-acid chain: Protein COLD-REGULATED 15A, chloroplastic (139 aa).

Residues 1-40 constitute a chloroplast transit peptide; it reads MAMSFSGAVLTGMASSFHSGAKQSSFGAVRVGQKTQFVVV.

This sequence belongs to the COR15 protein family. As to quaternary structure, forms homooligomers which interact with potential stromal substrates in the stroma of chloroplasts. Interacts with the galactose headgroup of the chloroplast lipid monogalactosyldiacylglycerol (MGDG).

The protein localises to the plastid. It is found in the chloroplast stroma. Exhibits cryoprotective activity toward stromal substrates (e.g. LDH and rubisco) in chloroplasts and in protoplasts and confers freezing tolerance to plants in a CBF-dependent manner. Protectant against various stresses (e.g. cold, drought and heat stress) by preventing protein aggregation (e.g. LDH) and attenuating enzyme inactivation. Influences the intrinsic curvature of the inner membrane of the chloroplast envelope, and modulates the freeze-induced lamellar-to-hexagonal II phase transitions that occur in regions where the plasma membrane is brought into close apposition with the chloroplast envelope during freeze-induced osmotic contraction. Mediates a shift in the melting curves of phospholipids-containing membranes to lower temperatures. Involved in the regulation of leaf senescence by abscisic acid (ABA) in a VNI2-dependent manner. The polypeptide is Protein COLD-REGULATED 15A, chloroplastic (Arabidopsis thaliana (Mouse-ear cress)).